A 152-amino-acid chain; its full sequence is Transcriptional regulator MraZ (152 aa).

SpoVT-AbrB domains follow at residues 5–52 (ATLV…PLPE) and 81–124 (ASEC…DETT).

The protein belongs to the MraZ family. In terms of assembly, forms oligomers.

Its subcellular location is the cytoplasm. The protein resides in the nucleoid. Its function is as follows. Negatively regulates its own expression and that of the subsequent genes in the proximal part of the division and cell wall (dcw) gene cluster. Acts by binding directly to DNA. May also regulate the expression of genes outside the dcw cluster. This Shigella sonnei (strain Ss046) protein is Transcriptional regulator MraZ.